The chain runs to 156 residues: Small ribosomal subunit protein uS7 (156 aa).

The protein belongs to the universal ribosomal protein uS7 family. As to quaternary structure, part of the 30S ribosomal subunit. Contacts proteins S9 and S11.

Its function is as follows. One of the primary rRNA binding proteins, it binds directly to 16S rRNA where it nucleates assembly of the head domain of the 30S subunit. Is located at the subunit interface close to the decoding center, probably blocks exit of the E-site tRNA. This is Small ribosomal subunit protein uS7 from Shewanella sp. (strain W3-18-1).